We begin with the raw amino-acid sequence, 309 residues long: Taste receptor type 2 member 46 (309 aa).

M1 is a topological domain (extracellular). The helical transmembrane segment at 2–22 threads the bilayer; it reads ITFLPIIFSILIVVTFVIGNF. The Cytoplasmic portion of the chain corresponds to 23–46; sequence ANGFIALANSIEWFKRQKISFADQ. A helical transmembrane segment spans residues 47–67; sequence ILTALAVSRVGLLWVLLLNWY. The Extracellular portion of the chain corresponds to 68-86; that stretch reads ATELNPAFYSIEVRITAYN. The helical transmembrane segment at 87-107 threads the bilayer; the sequence is LWAVINHFSNWLATSLSIFYL. Residues 108-126 lie on the Cytoplasmic side of the membrane; it reads LKIANFSNLIFLCLKRRVK. The chain crosses the membrane as a helical span at residues 127–147; the sequence is SVVLVILLGPLLFLVCHLFVI. At 148 to 178 the chain is on the extracellular side; the sequence is NMNQIIWTKEYEGNMTWKIKLRSAMYLSNTT. N161 and N176 each carry an N-linked (GlcNAc...) asparagine glycan. Residues 179–199 traverse the membrane as a helical segment; sequence VTILANLVPFTLTLISFLLLI. Residues 200–229 lie on the Cytoplasmic side of the membrane; that stretch reads CSLCKHLEKMQLHGKGSQDPSMKVHIKALQ. Residues 230-250 traverse the membrane as a helical segment; that stretch reads TVTSFLLLCAIYFLSIIMSVW. At 251 to 259 the chain is on the extracellular side; that stretch reads SFESLENKP. A helical membrane pass occupies residues 260 to 280; it reads VFMFCEAITFSYPSTHPFILI. Topologically, residues 281-309 are cytoplasmic; sequence WGNKKLKQTFLSVLWHVRYWVKGEKPSXP.

Belongs to the G-protein coupled receptor T2R family.

It localises to the membrane. It is found in the cell projection. The protein localises to the cilium membrane. Functionally, receptor that may play a role in the perception of bitterness and is gustducin-linked. May play a role in sensing the chemical composition of the gastrointestinal content. The activity of this receptor may stimulate alpha gustducin, mediate PLC-beta-2 activation and lead to the gating of TRPM5. In airway epithelial cells, binding of bitter compounds increases the intracellular calcium ion concentration and stimulates ciliary beat frequency. This chain is Taste receptor type 2 member 46 (TAS2R46), found in Pan troglodytes (Chimpanzee).